We begin with the raw amino-acid sequence, 169 residues long: Nucleoside diphosphate kinase 3 (169 aa).

K29, R105, T111, R122, V129, and N132 together coordinate ADP. H135 serves as the catalytic Pros-phosphohistidine intermediate.

This sequence belongs to the NDK family. Homohexamer. Interacts (via its N-terminal region) with KAT5; this interaction enables recruitment of NME3 at DNA damage sites where it plays a role in the repair of DNA. Found in association with several ciliary nephronophthisis proteins, including NEK8, CEP164, ANKS6. The cofactor is Mg(2+).

The protein resides in the mitochondrion outer membrane. It localises to the cytoplasm. The protein localises to the cytoskeleton. Its subcellular location is the cilium basal body. It carries out the reaction a 2'-deoxyribonucleoside 5'-diphosphate + ATP = a 2'-deoxyribonucleoside 5'-triphosphate + ADP. It catalyses the reaction a ribonucleoside 5'-diphosphate + ATP = a ribonucleoside 5'-triphosphate + ADP. Catalyzes the phosphorylation of ribonucleosides and deoxyribonucleoside diphosphates, other than ATP, into the corresponding triphosphates with ATP as the major phosphate donor. The ATP gamma phosphate is transferred to the nucleoside diphosphate beta phosphate via a ping-pong mechanism, using a phosphorylated active-site intermediate. Through the catalyzed exchange of gamma-phosphate between di- and triphosphonucleosides participates in regulation of intracellular nucleotide homeostasis. Inhibits granulocyte differentiation. May be required for ciliary function during renal development. In terms of biological role, independently of its kinase activity, facilitates mitochondrial tethering prior to membrane fusion through its direct membrane-binding and hexamerization. Implicated in repair of both single- and double-stranded breaks in DNA through its association with the ribonucleotide reductase complex (RNR complex) via its interaction with the histone acetyltransferase KAT5, this interaction enables recruitment of NME3 at DNA damage sites where it plays a role in the repair of DNA, independently of its kinase activity. This chain is Nucleoside diphosphate kinase 3 (Nme3), found in Mus musculus (Mouse).